Reading from the N-terminus, the 418-residue chain is Histidine--tRNA ligase (418 aa).

This sequence belongs to the class-II aminoacyl-tRNA synthetase family.

The protein resides in the cytoplasm. The catalysed reaction is tRNA(His) + L-histidine + ATP = L-histidyl-tRNA(His) + AMP + diphosphate + H(+). The sequence is that of Histidine--tRNA ligase from Methanococcus maripaludis (strain C7 / ATCC BAA-1331).